We begin with the raw amino-acid sequence, 149 residues long: Limonene-1,2-epoxide hydrolase (149 aa).

Asp101 serves as the catalytic Proton donor. Asp132 (proton acceptor) is an active-site residue.

The protein belongs to the limonene-1,2-epoxide hydrolase family. Monomer.

The enzyme catalyses limonene 1,2-epoxide + H2O = limonene-1,2-diol. The protein operates within terpene metabolism; (4R)-limonene degradation; (1S,4R)-1-hydroxylimonen-2-one from (4R)-limonene: step 2/3. Functionally, catalyzes the conversion of limonene-1,2-epoxide to limonene-1,2-diol. Can use both the (-) and (+) isomers of limonene-1,2-epoxide as substrates and also has some activity with 1-methylcyclohexene oxide, cyclohexene oxide and indene oxide as substrates. In Rhodococcus erythropolis (Arthrobacter picolinophilus), this protein is Limonene-1,2-epoxide hydrolase (limA).